We begin with the raw amino-acid sequence, 266 residues long: Vitamin B12-binding protein (266 aa).

A signal peptide spans 1-22; that stretch reads MVKQMFRALVALLLTLPVWLYA. Positions 25–266 constitute a Fe/B12 periplasmic-binding domain; the sequence is RVITLSPANT…QLCNALSQVN (242 aa). Residues Tyr-50 and 242–246 each bind cyanocob(III)alamin; that span reads DWFER. Cys-183 and Cys-259 are disulfide-bonded.

The protein belongs to the BtuF family. In terms of assembly, the complex is composed of two ATP-binding proteins (BtuD), two transmembrane proteins (BtuC) and a solute-binding protein (BtuF).

The protein resides in the periplasm. Its function is as follows. Part of the ABC transporter complex BtuCDF involved in vitamin B12 import. Binds vitamin B12 and delivers it to the periplasmic surface of BtuC. The polypeptide is Vitamin B12-binding protein (Salmonella choleraesuis (strain SC-B67)).